Here is a 573-residue protein sequence, read N- to C-terminus: Zinc finger protein 10 (573 aa).

The region spanning 14–85 (VTFKDVFVDF…EREIHQETHP (72 aa)) is the KRAB domain. A C2H2-type 1; atypical zinc finger spans residues 206 to 232 (DSCASNSNECGQTFCQNIHLIQFARTH). 9 consecutive C2H2-type zinc fingers follow at residues 265–287 (YECK…QLIH), 293–315 (YECK…QKTH), 321–343 (YECK…QRTH), 349–371 (YTCN…QRTH), 377–399 (YECP…QRTH), 405–427 (YECN…HRIH), 433–455 (FECK…QRTH), 461–483 (YECH…QRIH), and 489–511 (YECC…QRIH). The segment at 517–539 (YKCNQCGIIFSQNSPFIVHQIAH) adopts a C2H2-type 11; atypical zinc-finger fold.

It belongs to the krueppel C2H2-type zinc-finger protein family. As to quaternary structure, interacts (via the KRAB domain) with TRIM28 (via the RBCC domain).

It localises to the nucleus. May be involved in transcriptional regulation. This is Zinc finger protein 10 (ZNF10) from Homo sapiens (Human).